We begin with the raw amino-acid sequence, 753 residues long: MGRRAWTLQCTAFSLFCAWCAMNSVKAKKQFVNEWAAEIPGGPEAASAIAQELGYDLLGQIGSLENHYLFKHRNHPRRSRRSALHITKRLSDDDRVIWAEQQYEKERSKRSVLRDSALDLFNDPMWNQQWYLQDTRMTATLPKLDLHVIPVWQKGITGKGVVITVLDDGLEWNHTDIYANYDPEASYDFNDNDHDPFPRYDLINENKHGTRCAGEIAMQANNHKCGVGVAYNSKVGGIRMLDGIVTDAIEASLIGFNPGHVDIYSASWGPNDDGKTVEGPGRLAQKAFEYGVKQGRQGKGSIFVWASGNGGRQGDNCDCDGYTDSIYTISINSASQQGLSPWYAEKCSSTLATSYSSGDYTDQRITSADLHNDCTETHTGTSASAPLAAGIFALALEANPNLTWRDMQHLVVWTSEYDPLANNPGWKKNGAGLMVNSRFGFGLLNAKALVDLADPSTWSSVPEKKECVVKDNDFEPRALKANGEVIIEIPTRACEGQENAIKSLEHVQFEATIEYSRRGDLHVTLTSAAGTSTVLLAERERDTSPNGFKNWDFMSVHTWGENPIGTWTLRIADMSGRIQNEGRIVTWKLILHGTSSQPEHMKQPRVYTSYNTVQNDRRGVEKVVDSGEEQPTQEGLDENAQASQSPSGSGVGGRRDELAEGAPSEAMLRLLQSAFSKNSPSKQSPKKPPSAKPNIPYENFYEALERLNKPSQLKDSEDSLYNDYVDGFYNTKPYKHRDDRLLQALVDLLREEN.

The N-terminal stretch at 1–27 (MGRRAWTLQCTAFSLFCAWCAMNSVKA) is a signal peptide. Residues 28 to 110 (KKQFVNEWAA…QQYEKERSKR (83 aa)) constitute a propeptide that is removed on maturation. The 322-residue stretch at 129–450 (QWYLQDTRMT…FGLLNAKALV (322 aa)) folds into the Peptidase S8 domain. Aspartate 167 acts as the Charge relay system in catalysis. N-linked (GlcNAc...) asparagine glycosylation is present at asparagine 173. Residue histidine 208 is the Charge relay system of the active site. 2 disulfides stabilise this stretch: cysteine 225/cysteine 374 and cysteine 317/cysteine 347. Serine 382 acts as the Charge relay system in catalysis. An N-linked (GlcNAc...) asparagine glycan is attached at asparagine 401. Residues 460–597 (SVPEKKECVV…KLILHGTSSQ (138 aa)) enclose the P/Homo B domain. Cysteine 467 and cysteine 494 are joined by a disulfide. 2 disordered regions span residues 617–657 (RRGV…RRDE) and 676–695 (SKNSPSKQSPKKPPSAKPNI).

This sequence belongs to the peptidase S8 family. Furin subfamily. Requires Ca(2+) as cofactor.

It localises to the cytoplasmic vesicle. The protein resides in the secretory vesicle. It catalyses the reaction Release of protein hormones, neuropeptides and renin from their precursors, generally by hydrolysis of -Lys-Arg-|- bonds.. Its function is as follows. Involved in the processing of hormone and other protein precursors at sites comprised of pairs of basic amino acid residues. Substrates include POMC, renin, enkephalin, dynorphin, somatostatin, insulin and AGRP. The sequence is that of Neuroendocrine convertase 1 (PCSK1) from Bos taurus (Bovine).